Consider the following 365-residue polypeptide: Aminomethyltransferase (365 aa).

Belongs to the GcvT family. In terms of assembly, the glycine cleavage system is composed of four proteins: P, T, L and H.

The enzyme catalyses N(6)-[(R)-S(8)-aminomethyldihydrolipoyl]-L-lysyl-[protein] + (6S)-5,6,7,8-tetrahydrofolate = N(6)-[(R)-dihydrolipoyl]-L-lysyl-[protein] + (6R)-5,10-methylene-5,6,7,8-tetrahydrofolate + NH4(+). The glycine cleavage system catalyzes the degradation of glycine. This Parafrankia sp. (strain EAN1pec) protein is Aminomethyltransferase.